We begin with the raw amino-acid sequence, 290 residues long: Putative transport permease ycf38 (290 aa).

Helical transmembrane passes span 21–41 (VTSF…FIQL), 46–66 (ITLI…GALF), 86–106 (PGIL…PLIF), 133–153 (FFIS…GVFL), 167–187 (FFFL…LALL), 194–213 (LIAV…TALA), and 261–281 (INIG…FLLF). The ABC transmembrane type-2 domain maps to 46-284 (ITLISGILQP…LVGFLLFKKI (239 aa)).

Belongs to the ABC-2 integral membrane protein family.

It is found in the plastid. Its subcellular location is the cyanelle membrane. The chain is Putative transport permease ycf38 (ycf38) from Cyanophora paradoxa.